Consider the following 327-residue polypeptide: Pyruvate dehydrogenase E1 component subunit beta (327 aa).

Glu60 is a thiamine diphosphate binding site.

As to quaternary structure, heterodimer of an alpha and a beta chain. Requires thiamine diphosphate as cofactor.

The catalysed reaction is N(6)-[(R)-lipoyl]-L-lysyl-[protein] + pyruvate + H(+) = N(6)-[(R)-S(8)-acetyldihydrolipoyl]-L-lysyl-[protein] + CO2. Functionally, the pyruvate dehydrogenase complex catalyzes the overall conversion of pyruvate to acetyl-CoA and CO(2). It contains multiple copies of three enzymatic components: pyruvate dehydrogenase (E1), dihydrolipoamide acetyltransferase (E2) and lipoamide dehydrogenase (E3). This is Pyruvate dehydrogenase E1 component subunit beta (pdhB) from Acholeplasma laidlawii.